The following is a 553-amino-acid chain: Hydroxylamine reductase (553 aa).

[2Fe-2S] cluster-binding residues include C3, C6, C18, and C25. H252, E276, C320, C408, C436, C461, E495, and K497 together coordinate hybrid [4Fe-2O-2S] cluster. The residue at position 408 (C408) is a Cysteine persulfide.

The protein belongs to the HCP family. It depends on [2Fe-2S] cluster as a cofactor. Hybrid [4Fe-2O-2S] cluster serves as cofactor.

The protein resides in the cytoplasm. It catalyses the reaction A + NH4(+) + H2O = hydroxylamine + AH2 + H(+). In terms of biological role, catalyzes the reduction of hydroxylamine to form NH(3) and H(2)O. In Aliivibrio fischeri (strain ATCC 700601 / ES114) (Vibrio fischeri), this protein is Hydroxylamine reductase.